The following is an 885-amino-acid chain: Sensor histidine kinase KdpD (885 aa).

Helical transmembrane passes span 384–404, 415–435, 436–456, and 464–484; these read AIDM…GLWI, IILM…RSFI, IGFL…TEPR, and FDYP…SALL. Residues 660-880 enclose the Histidine kinase domain; sequence SISHDIRTPL…IFYFNIYTDF (221 aa). At histidine 663 the chain carries Phosphohistidine; by autocatalysis.

It localises to the membrane. It catalyses the reaction ATP + protein L-histidine = ADP + protein N-phospho-L-histidine.. With respect to regulation, cyclic di-AMP is a negative regulator of the Kdp system. In terms of biological role, member of the two-component regulatory system KdpD/KdpE that regulates the transcription of a series of virulence factors through sensing external K(+) concentrations. Also regulates capsular polysaccharide production. May function as a membrane-associated protein kinase that phosphorylates KdpE in response to environmental signals. In turn, KpdE functions as a transcriptional regulator by direct binding to promoter regions of target genes including spa, hla, aur and geh. The polypeptide is Sensor histidine kinase KdpD (Staphylococcus aureus (strain NCTC 8325 / PS 47)).